Consider the following 232-residue polypeptide: Ornithine carbamoyltransferase (232 aa).

Carbamoyl phosphate-binding positions include Q15, R39, and 66–69 (HPTQ). Residues N99, D163, and 167–168 (SM) each bind L-ornithine. Carbamoyl phosphate-binding positions include 204–207 (HCLP) and T232.

This sequence belongs to the aspartate/ornithine carbamoyltransferase superfamily. OTCase family.

Its subcellular location is the cytoplasm. It catalyses the reaction carbamoyl phosphate + L-ornithine = L-citrulline + phosphate + H(+). Its pathway is amino-acid biosynthesis; L-arginine biosynthesis; L-arginine from L-ornithine and carbamoyl phosphate: step 1/3. In terms of biological role, reversibly catalyzes the transfer of the carbamoyl group from carbamoyl phosphate (CP) to the N(epsilon) atom of ornithine (ORN) to produce L-citrulline. In Neisseria flava, this protein is Ornithine carbamoyltransferase (argF).